The following is a 631-amino-acid chain: MVDINLECVHQIEPKTRSAGQQQQERGLKEAYLEAVRILLVLLENILAQPENSMFRTIRQENKAIKEKLLSLPGCERLLEAIGFVRAPSSNAYTLPTEVSLQQVKKYRDALSERRTAWLNGTVSKSPPQQSTTSTTPLFIKPSVEYRHRIAFPRVLRTNNNFLQSLELYSDAVMQYEDNLLLATGRTLIPVEELTEMASEKLIDIQDQIASGERQEKEPCVRDLLLVELVNWFNTQFFQWVNNIPCRVCGSEESRLRRTEREGDIRVEVTVCCGQESKFYRYNDISQLLVSRKGRCGEYANCFTFLCRALDYDARIVHSHFDHVWTEVYSEAQMRWLHVDPSENVIDSPLMYQHGWKRHIDYILAYSRDDIQDVTWRYTNDHQKILHLRKLCGEKEMVQTLDAIRAKRRQNCTADRKLFLSQRNMYEVIGLTLERKPTENELKGRSSGSLSWRQSRGEHTFTNIFVFNLSATELQKRQLNVRYSCATDTYERYAKEGEHITILDSYKTWQKAQFSSKNIFRKVERDWKMAYLARLEDTDCGEIAWTFDFSKTNLKVKSYNLVFETKTFGDGKISVTVDATDGSASVENATGFKIVAKLTGGKGDVAWQHTQLFRQSLNSRDYPFDLQVQLH.

The PUB domain occupies 34 to 97; sequence EAVRILLVLL…PSSNAYTLPT (64 aa). Residue serine 126 is modified to Phosphoserine. Zn(2+) is bound by residues cysteine 246, cysteine 249, cysteine 272, and cysteine 273. Cysteine 296 serves as the catalytic Nucleophile. Catalysis depends on residues histidine 323 and aspartate 340. The PAW domain occupies 441-631; sequence ELKGRSSGSL…YPFDLQVQLH (191 aa).

It belongs to the transglutaminase-like superfamily. PNGase family. Zn(2+) is required as a cofactor.

The protein localises to the cytoplasm. It carries out the reaction Hydrolysis of an N(4)-(acetyl-beta-D-glucosaminyl)asparagine residue in which the glucosamine residue may be further glycosylated, to yield a (substituted) N-acetyl-beta-D-glucosaminylamine and a peptide containing an aspartate residue.. Functionally, specifically deglycosylates the denatured form of N-linked glycoproteins in the cytoplasm and assists their proteasome-mediated degradation. Cleaves the beta-aspartyl-glucosamine (GlcNAc) of the glycan and the amide side chain of Asn, converting Asn to Asp. Prefers proteins containing high-mannose over those bearing complex type oligosaccharides. Can recognize misfolded proteins in the endoplasmic reticulum that are exported to the cytosol to be destroyed and deglycosylate them, while it has no activity toward native proteins. Deglycosylation is a prerequisite for subsequent proteasome-mediated degradation of some, but not all, misfolded glycoproteins. This is Peptide-N(4)-(N-acetyl-beta-glucosaminyl)asparagine amidase (Pngl) from Drosophila melanogaster (Fruit fly).